Consider the following 202-residue polypeptide: ATP-dependent Clp protease proteolytic subunit 1 (202 aa).

The active-site Nucleophile is Ser-99. The active site involves His-123.

The protein belongs to the peptidase S14 family. Fourteen ClpP subunits assemble into 2 heptameric rings which stack back to back to give a disk-like structure with a central cavity, resembling the structure of eukaryotic proteasomes.

It localises to the cytoplasm. The catalysed reaction is Hydrolysis of proteins to small peptides in the presence of ATP and magnesium. alpha-casein is the usual test substrate. In the absence of ATP, only oligopeptides shorter than five residues are hydrolyzed (such as succinyl-Leu-Tyr-|-NHMec, and Leu-Tyr-Leu-|-Tyr-Trp, in which cleavage of the -Tyr-|-Leu- and -Tyr-|-Trp bonds also occurs).. In terms of biological role, cleaves peptides in various proteins in a process that requires ATP hydrolysis. Has a chymotrypsin-like activity. Plays a major role in the degradation of misfolded proteins. This Symbiobacterium thermophilum (strain DSM 24528 / JCM 14929 / IAM 14863 / T) protein is ATP-dependent Clp protease proteolytic subunit 1.